The primary structure comprises 227 residues: LexA repressor (227 aa).

The segment at residues F25–T45 is a DNA-binding region (H-T-H motif). Catalysis depends on for autocatalytic cleavage activity residues S148 and K186.

Belongs to the peptidase S24 family. In terms of assembly, homodimer.

It catalyses the reaction Hydrolysis of Ala-|-Gly bond in repressor LexA.. Functionally, represses a number of genes involved in the response to DNA damage (SOS response), including recA and lexA. In the presence of single-stranded DNA, RecA interacts with LexA causing an autocatalytic cleavage which disrupts the DNA-binding part of LexA, leading to derepression of the SOS regulon and eventually DNA repair. The polypeptide is LexA repressor (Cereibacter sphaeroides (strain ATCC 17029 / ATH 2.4.9) (Rhodobacter sphaeroides)).